Reading from the N-terminus, the 397-residue chain is Elongation factor Tu (397 aa).

The region spanning 10-207 is the tr-type G domain; the sequence is KPHVNVGTIG…TLDTYIPEPE (198 aa). Positions 19–26 are G1; that stretch reads GHVDHGKT. 19-26 is a binding site for GTP; sequence GHVDHGKT. Threonine 26 contacts Mg(2+). Residues 60–64 are G2; the sequence is GITIN. The interval 81–84 is G3; that stretch reads DCPG. Residues 81-85 and 136-139 each bind GTP; these read DCPGH and NKAD. The G4 stretch occupies residues 136–139; it reads NKAD. The segment at 174-176 is G5; the sequence is SAL.

It belongs to the TRAFAC class translation factor GTPase superfamily. Classic translation factor GTPase family. EF-Tu/EF-1A subfamily. In terms of assembly, monomer.

Its subcellular location is the cytoplasm. It catalyses the reaction GTP + H2O = GDP + phosphate + H(+). GTP hydrolase that promotes the GTP-dependent binding of aminoacyl-tRNA to the A-site of ribosomes during protein biosynthesis. In Pseudomonas fluorescens (strain ATCC BAA-477 / NRRL B-23932 / Pf-5), this protein is Elongation factor Tu.